A 266-amino-acid polypeptide reads, in one-letter code: MAFRKPDEIAEAAIEAGMKKIKLPLPSLLVLGFLGGAFIALGYLLDIRVIGDLPKEWGSLSSLIGAAVFPVGLILVVLAGAELITGNMMSVAMALFSRKISVKELAINWGIVTIMNLIGALFVAYFFGHLVGLTETGPYLEKTIAVAQGKLDMSFGKVLISAIGCNWLVCLAVWLSFGAQDAAGKILGIWFPIMAFVAIGFQHVVANMFVIPAAIFAGSFTWGQFIGNIIPAFIGNVIGGAVFVGLIYFIAYHKKDRSRKEMKQVS.

Transmembrane regions (helical) follow at residues 25 to 45 (LPSL…GYLL), 64 to 84 (IGAA…AELI), 111 to 131 (IVTI…GHLV), 158 to 178 (VLIS…LSFG), 186 to 206 (ILGI…HVVA), 209 to 229 (FVIP…IGNI), and 230 to 250 (IPAF…IYFI).

The protein belongs to the FNT transporter (TC 1.A.16) family.

The protein localises to the cell membrane. This is an uncharacterized protein from Bacillus subtilis (strain 168).